A 341-amino-acid polypeptide reads, in one-letter code: Anthranilate phosphoribosyltransferase (341 aa).

5-phospho-alpha-D-ribose 1-diphosphate-binding positions include Gly81, 84-85 (GD), Thr89, 91-94 (NIST), 109-117 (KHGNRKASS), and Thr121. Gly81 provides a ligand contact to anthranilate. Ser93 contacts Mg(2+). Asn112 lines the anthranilate pocket. Anthranilate is bound at residue Arg167. Residues Asp226 and Glu227 each coordinate Mg(2+).

The protein belongs to the anthranilate phosphoribosyltransferase family. As to quaternary structure, homodimer. Mg(2+) serves as cofactor.

The enzyme catalyses N-(5-phospho-beta-D-ribosyl)anthranilate + diphosphate = 5-phospho-alpha-D-ribose 1-diphosphate + anthranilate. It participates in amino-acid biosynthesis; L-tryptophan biosynthesis; L-tryptophan from chorismate: step 2/5. Catalyzes the transfer of the phosphoribosyl group of 5-phosphorylribose-1-pyrophosphate (PRPP) to anthranilate to yield N-(5'-phosphoribosyl)-anthranilate (PRA). This chain is Anthranilate phosphoribosyltransferase, found in Parvibaculum lavamentivorans (strain DS-1 / DSM 13023 / NCIMB 13966).